The chain runs to 1116 residues: Cation channel sperm-associated auxiliary subunit beta (1116 aa).

Residues 1–1053 are Extracellular-facing; it reads MESPLIYVSV…QIYVDEAPLP (1053 aa). Cys35 and Cys60 are joined by a disulfide. Asn90, Asn100, Asn118, Asn226, and Asn321 each carry an N-linked (GlcNAc...) asparagine glycan. Cys189 and Cys302 form a disulfide bridge. A disulfide bridge links Cys330 with Cys343. 2 N-linked (GlcNAc...) asparagine glycosylation sites follow: Asn618 and Asn690. 4 cysteine pairs are disulfide-bonded: Cys718-Cys816, Cys829-Cys1037, Cys911-Cys920, and Cys922-Cys937. Residues Asn913 and Asn921 are each glycosylated (N-linked (GlcNAc...) asparagine). N-linked (GlcNAc...) asparagine glycans are attached at residues Asn1010 and Asn1015. Residues 1054-1076 traverse the membrane as a helical segment; sequence FPGHTLIAVATAVVLGGLIFIAF. Over 1077–1116 the chain is Cytoplasmic; that stretch reads MFQLQGIHPWRTFQRWIRRNQEKFSSISLSELIHRSKSEE.

As to quaternary structure, component of the CatSper complex or CatSpermasome composed of the core pore-forming members CATSPER1, CATSPER2, CATSPER3 and CATSPER4 as well as auxiliary members CATSPERB, CATSPERG, CATSPERD, CATSPERE, CATSPERZ, C2CD6/CATSPERT, TMEM249, TMEM262 and EFCAB9. HSPA1 may be an additional auxiliary complex member. The core complex members CATSPER1, CATSPER2, CATSPER3 and CATSPER4 form a heterotetrameric channel. The auxiliary CATSPERB, CATSPERG, CATSPERD and CATSPERE subunits form a pavilion-like structure over the pore which stabilizes the complex through interactions with CATSPER4, CATSPER3, CATSPER1 and CATSPER2 respectively. TMEM262/CATSPERH interacts with CATSPERB, further stabilizing the complex. C2CD6/CATSPERT interacts at least with CATSPERD and is required for targeting the CatSper complex in the flagellar membrane.

The protein resides in the cell projection. It is found in the cilium. The protein localises to the flagellum membrane. In terms of biological role, auxiliary component of the CatSper complex, a complex involved in sperm cell hyperactivation. Sperm cell hyperactivation is needed for sperm motility which is essential late in the preparation of sperm for fertilization. This chain is Cation channel sperm-associated auxiliary subunit beta, found in Homo sapiens (Human).